The primary structure comprises 375 residues: Enoyl-[acyl-carrier-protein] reductase [NADH] 1, chloroplastic (375 aa).

A chloroplast-targeting transit peptide spans 1–67; the sequence is MGASAATGMQ…SSKRSGVAIR (67 aa). NAD(+) contacts are provided by residues Gly-91, Tyr-98, 155–156, 202–203, and Leu-252; these read DA and SL. Active-site proton acceptor residues include Tyr-254 and Tyr-264. NAD(+) is bound by residues Lys-272 and 302 to 306; that span reads LGSRA.

This sequence belongs to the short-chain dehydrogenases/reductases (SDR) family. FabI subfamily. As to quaternary structure, homotetramer.

It is found in the plastid. It localises to the chloroplast. The enzyme catalyses a 2,3-saturated acyl-[ACP] + NAD(+) = a (2E)-enoyl-[ACP] + NADH + H(+). Its pathway is lipid metabolism; fatty acid biosynthesis. Functionally, catalyzes the NAD-dependent reduction of a carbon-carbon double bond in an enoyl moiety that is covalently linked to an acyl carrier protein (ACP). Catalyzes the last reduction step in the de novo synthesis cycle of fatty acids. Involved in the elongation cycle of fatty acids which are used in lipid metabolism. Required for normal plant growth. This chain is Enoyl-[acyl-carrier-protein] reductase [NADH] 1, chloroplastic, found in Oryza sativa subsp. japonica (Rice).